A 49-amino-acid chain; its full sequence is Large ribosomal subunit protein bL33 (49 aa).

Belongs to the bacterial ribosomal protein bL33 family.

This is Large ribosomal subunit protein bL33 from Syntrophobacter fumaroxidans (strain DSM 10017 / MPOB).